Consider the following 185-residue polypeptide: Crossover junction endodeoxyribonuclease RuvC (185 aa).

Active-site residues include D7, E68, and D141. The Mg(2+) site is built by D7, E68, and D141.

It belongs to the RuvC family. Homodimer which binds Holliday junction (HJ) DNA. The HJ becomes 2-fold symmetrical on binding to RuvC with unstacked arms; it has a different conformation from HJ DNA in complex with RuvA. In the full resolvosome a probable DNA-RuvA(4)-RuvB(12)-RuvC(2) complex forms which resolves the HJ. Mg(2+) is required as a cofactor.

Its subcellular location is the cytoplasm. It carries out the reaction Endonucleolytic cleavage at a junction such as a reciprocal single-stranded crossover between two homologous DNA duplexes (Holliday junction).. In terms of biological role, the RuvA-RuvB-RuvC complex processes Holliday junction (HJ) DNA during genetic recombination and DNA repair. Endonuclease that resolves HJ intermediates. Cleaves cruciform DNA by making single-stranded nicks across the HJ at symmetrical positions within the homologous arms, yielding a 5'-phosphate and a 3'-hydroxyl group; requires a central core of homology in the junction. The consensus cleavage sequence is 5'-(A/T)TT(C/G)-3'. Cleavage occurs on the 3'-side of the TT dinucleotide at the point of strand exchange. HJ branch migration catalyzed by RuvA-RuvB allows RuvC to scan DNA until it finds its consensus sequence, where it cleaves and resolves the cruciform DNA. The sequence is that of Crossover junction endodeoxyribonuclease RuvC from Helicobacter hepaticus (strain ATCC 51449 / 3B1).